The primary structure comprises 357 residues: MTPILFIDRDGTLIEEPSDFQIDAYEKLRFVPQVIPALLKLRDAGYQFVIVTNQDGLGSDSYPRASFDGPNELMLQIFESQGITFRDVLIDCSWPQDNAPTRKPGIGLMTAYLQDRSIDWARSGMVGDRITDLQFAENLNIRGFQLRTEQFGGEWDWPGIAHALADAPRIAVVQRDTKETKIRVELDLDRAGDARIDTGLPFFDHMLEQIGKHGGFALDIQAEGDLHIDEHHTIEDTGLALGQALREALGDKRGIGRYGFTLPMDETLASAALDFSGRPYFVFEGEFKRERVGDMPTELVPHFFRSLCDASGLNLNLQVRGDNDHHKVEACFKALARALRPALARQGTALPTTKGAL.

Residues 1-168 are histidinol-phosphatase; it reads MTPILFIDRD…GIAHALADAP (168 aa). Asp-8 functions as the Nucleophile in the catalytic mechanism. Positions 8, 10, and 128 each coordinate Mg(2+). The active-site Proton donor is the Asp-10. The tract at residues 169-357 is imidazoleglycerol-phosphate dehydratase; it reads RIAVVQRDTK…TALPTTKGAL (189 aa).

The protein in the N-terminal section; belongs to the histidinol-phosphatase family. This sequence in the C-terminal section; belongs to the imidazoleglycerol-phosphate dehydratase family. Mg(2+) serves as cofactor.

It localises to the cytoplasm. It catalyses the reaction D-erythro-1-(imidazol-4-yl)glycerol 3-phosphate = 3-(imidazol-4-yl)-2-oxopropyl phosphate + H2O. It carries out the reaction L-histidinol phosphate + H2O = L-histidinol + phosphate. It functions in the pathway amino-acid biosynthesis; L-histidine biosynthesis; L-histidine from 5-phospho-alpha-D-ribose 1-diphosphate: step 6/9. The protein operates within amino-acid biosynthesis; L-histidine biosynthesis; L-histidine from 5-phospho-alpha-D-ribose 1-diphosphate: step 8/9. This Stenotrophomonas maltophilia (strain R551-3) protein is Histidine biosynthesis bifunctional protein HisB.